An 85-amino-acid polypeptide reads, in one-letter code: Toxin To9 (85 aa).

An N-terminal signal peptide occupies residues 1-19; the sequence is MNYSTLIAVASLLTAGTES. The 61-residue stretch at 21–81 folds into the LCN-type CS-alpha/beta domain; sequence KDGYPVKEGD…AAIKGYGRCR (61 aa). 4 disulfide bridges follow: cysteine 31/cysteine 80, cysteine 35/cysteine 56, cysteine 42/cysteine 63, and cysteine 46/cysteine 65. At proline 82 the chain carries Proline amide.

It belongs to the long (4 C-C) scorpion toxin superfamily. Sodium channel inhibitor family. Alpha subfamily. In terms of tissue distribution, expressed by the venom gland.

The protein resides in the secreted. Alpha toxins bind voltage-independently at site-3 of sodium channels (Nav) and inhibit the inactivation of the activated channels, thereby blocking neuronal transmission. This chain is Toxin To9, found in Tityus obscurus (Amazonian scorpion).